Consider the following 240-residue polypeptide: UDP-2,3-diacylglucosamine hydrolase (240 aa).

Positions 7, 9, 40, 78, and 113 each coordinate Mn(2+). Position 78–79 (78–79 (NR)) interacts with substrate. Substrate-binding residues include Asp-121, Ser-159, Lys-166, and His-194. Mn(2+) contacts are provided by His-194 and His-196.

This sequence belongs to the LpxH family. The cofactor is Mn(2+).

The protein localises to the cell inner membrane. The enzyme catalyses UDP-2-N,3-O-bis[(3R)-3-hydroxytetradecanoyl]-alpha-D-glucosamine + H2O = 2-N,3-O-bis[(3R)-3-hydroxytetradecanoyl]-alpha-D-glucosaminyl 1-phosphate + UMP + 2 H(+). It participates in glycolipid biosynthesis; lipid IV(A) biosynthesis; lipid IV(A) from (3R)-3-hydroxytetradecanoyl-[acyl-carrier-protein] and UDP-N-acetyl-alpha-D-glucosamine: step 4/6. Functionally, hydrolyzes the pyrophosphate bond of UDP-2,3-diacylglucosamine to yield 2,3-diacylglucosamine 1-phosphate (lipid X) and UMP by catalyzing the attack of water at the alpha-P atom. Involved in the biosynthesis of lipid A, a phosphorylated glycolipid that anchors the lipopolysaccharide to the outer membrane of the cell. The sequence is that of UDP-2,3-diacylglucosamine hydrolase from Pseudomonas putida (strain ATCC 700007 / DSM 6899 / JCM 31910 / BCRC 17059 / LMG 24140 / F1).